Consider the following 201-residue polypeptide: Single-stranded DNA-binding protein, mitochondrial (201 aa).

An SSB domain is found at 71-184 (VHRAIICGKV…RDGKIRMIKY (114 aa)).

Its subcellular location is the mitochondrion. Its function is as follows. Binds to ss-DNA. This is Single-stranded DNA-binding protein, mitochondrial from Arabidopsis thaliana (Mouse-ear cress).